The primary structure comprises 130 residues: Small ribosomal subunit protein uS9 (130 aa).

The protein belongs to the universal ribosomal protein uS9 family.

This is Small ribosomal subunit protein uS9 from Pseudomonas entomophila (strain L48).